The chain runs to 947 residues: Bifunctional glutamine synthetase adenylyltransferase/adenylyl-removing enzyme (947 aa).

Positions 1-440 (MTPLSSPLSQ…VFNELIGDDE (440 aa)) are adenylyl removase. The segment at 450–947 (SEPWREVWQD…ASWRKWLVAV (498 aa)) is adenylyl transferase.

It belongs to the GlnE family. Mg(2+) serves as cofactor.

The catalysed reaction is [glutamine synthetase]-O(4)-(5'-adenylyl)-L-tyrosine + phosphate = [glutamine synthetase]-L-tyrosine + ADP. The enzyme catalyses [glutamine synthetase]-L-tyrosine + ATP = [glutamine synthetase]-O(4)-(5'-adenylyl)-L-tyrosine + diphosphate. Involved in the regulation of glutamine synthetase GlnA, a key enzyme in the process to assimilate ammonia. When cellular nitrogen levels are high, the C-terminal adenylyl transferase (AT) inactivates GlnA by covalent transfer of an adenylyl group from ATP to specific tyrosine residue of GlnA, thus reducing its activity. Conversely, when nitrogen levels are low, the N-terminal adenylyl removase (AR) activates GlnA by removing the adenylyl group by phosphorolysis, increasing its activity. The regulatory region of GlnE binds the signal transduction protein PII (GlnB) which indicates the nitrogen status of the cell. The polypeptide is Bifunctional glutamine synthetase adenylyltransferase/adenylyl-removing enzyme (Salmonella schwarzengrund (strain CVM19633)).